The primary structure comprises 82 residues: Polyketide biosynthesis acyl-carrier-protein AcpK (82 aa).

Positions 4–79 (QRIFEVLITN…ELAEVLYDKV (76 aa)) constitute a Carrier domain. Serine 39 carries the O-(pantetheine 4'-phosphoryl)serine modification.

Post-translationally, 4'-phosphopantetheine is transferred from CoA to a specific serine of apo-ACP by sfp.

The protein resides in the cytoplasm. The protein operates within antibiotic biosynthesis; bacillaene biosynthesis. In terms of biological role, involved in some intermediate steps for the synthesis of the antibiotic polyketide bacillaene which is involved in secondary metabolism. In Bacillus subtilis (strain 168), this protein is Polyketide biosynthesis acyl-carrier-protein AcpK (acpK).